Here is a 352-residue protein sequence, read N- to C-terminus: Selenide, water dikinase (352 aa).

Cys23 is an active-site residue. ATP contacts are provided by residues Lys26 and 54–56; that span reads SRD. Residue Asp57 coordinates Mg(2+). ATP-binding positions include Asp74, Asp97, and 145–147; that span reads GHS. Asp97 serves as a coordination point for Mg(2+). Position 233 (Asp233) interacts with Mg(2+).

The protein belongs to the selenophosphate synthase 1 family. Class I subfamily. Homodimer. Requires Mg(2+) as cofactor.

The catalysed reaction is hydrogenselenide + ATP + H2O = selenophosphate + AMP + phosphate + 2 H(+). In terms of biological role, synthesizes selenophosphate from selenide and ATP. In Shewanella sp. (strain ANA-3), this protein is Selenide, water dikinase.